A 651-amino-acid chain; its full sequence is Mitochondrial sodium/calcium exchanger protein (651 aa).

Residues 51 to 71 (VILIILGILYLIILFVIMSSI) traverse the membrane as a helical segment. Residues 72 to 91 (ADDFFCPAISGIVSHLRMSE) lie on the Cytoplasmic side of the membrane. Residues 92–112 (SIAGVTFLAFGNGAPDVFSSI) traverse the membrane as a helical segment. Residues 113 to 126 (SSVLTTPKPKADLA) are Extracellular-facing. The chain crosses the membrane as a helical span at residues 127-147 (LGDLFGTSIFVTTVVLAIIIF). Residues 148–161 (TKSFKVAIIPTLRD) lie on the Cytoplasmic side of the membrane. The helical transmembrane segment at 162–182 (LIFYMTTLAFIVFCFLKFDKI) threads the bilayer. Residue Glu-183 is a topological domain, extracellular. A helical membrane pass occupies residues 184–204 (VWMPATFLGIYGVYVVTVIIL). The Cytoplasmic portion of the chain corresponds to 205–398 (GIYRTHRKKR…PSRDEFSEMN (194 aa)). The chain crosses the membrane as a helical span at residues 399–419 (IFIKIVTVIKVVPVFFFKLTV). The Extracellular portion of the chain corresponds to 420–428 (PSNEMSWCK). Residues 429 to 449 (PLFILHCFASIQFALFSIQII) traverse the membrane as a helical segment. The Cytoplasmic portion of the chain corresponds to 450–458 (TLKPFDGSP). Residues 459 to 479 (GLWLYGLGFSAILAMVAMYFL) traverse the membrane as a helical segment. Residues 480 to 486 (PLSKEQK) lie on the Extracellular side of the membrane. The helical transmembrane segment at 487-507 (YYKEIYSYLGFLMSIAWIYAT) threads the bilayer. Over 508 to 510 (SNE) the chain is Cytoplasmic. The helical transmembrane segment at 511–531 (IVSVVTMIGVVTGLSMELLGL) threads the bilayer. Over 532 to 559 (TIMAWSNCIGDIVADIAVVKQGYPKMAM) the chain is Extracellular. A helical membrane pass occupies residues 560-580 (AAAIGGPLFNLLIGFGLPFTI). The Cytoplasmic segment spans residues 581–595 (AAAQGKEMELLINPV). A helical transmembrane segment spans residues 596-616 (YRLLMLFLGISLVTTFVALFI). The Extracellular segment spans residues 617-626 (QRFTVRRPHA). Residues 627-647 (VLLIFIFVVFLIFICLAEFHV) form a helical membrane-spanning segment. Residues 648–651 (LEWN) are Cytoplasmic-facing.

Belongs to the Ca(2+):cation antiporter (CaCA) (TC 2.A.19) family. SLC24A subfamily. In terms of tissue distribution, expressed in the seam cells of the organism. Expression is visible in the seam cells across all larval stages, and expression persists into the adult stage of the organism.

The protein resides in the mitochondrion inner membrane. Inhibited by the sodium/calcium exchanger inhibitor CGP-37157. Functionally, mitochondrial sodium/calcium antiporter that mediates sodium-dependent calcium efflux from mitochondrion, thereby acting as a key regulator of mitochondrion calcium homeostasis. Required for patterning of neural circuits: functions in the same pathway as RAC-dependent effectors of the unc-6/netrin signaling pathway to set left/ right patterning of the VD/DD GABAergic circuit. This chain is Mitochondrial sodium/calcium exchanger protein, found in Caenorhabditis elegans.